We begin with the raw amino-acid sequence, 241 residues long: Ribonuclease 3 (241 aa).

Positions L8–G137 constitute an RNase III domain. E50 contributes to the Mg(2+) binding site. D54 is a catalytic residue. Mg(2+) is bound by residues D123 and E126. E126 is an active-site residue. One can recognise a DRBM domain in the interval D164 to L233. Residues R214–K241 form a disordered region.

Belongs to the ribonuclease III family. In terms of assembly, homodimer. Requires Mg(2+) as cofactor.

It is found in the cytoplasm. It carries out the reaction Endonucleolytic cleavage to 5'-phosphomonoester.. Digests double-stranded RNA. Involved in the processing of primary rRNA transcript to yield the immediate precursors to the large and small rRNAs (23S and 16S). Processes some mRNAs, and tRNAs when they are encoded in the rRNA operon. Processes pre-crRNA and tracrRNA of type II CRISPR loci if present in the organism. The chain is Ribonuclease 3 from Pelotomaculum thermopropionicum (strain DSM 13744 / JCM 10971 / SI).